Consider the following 327-residue polypeptide: Apoptosis facilitator Bcl-2-like protein 14 (327 aa).

Phosphoserine is present on S44. The short motif at 212–226 is the BH3 element; that stretch reads IVELLKYSGDQLERK. Residues 308–315 carry the BH2 motif; sequence WIQQHGGW.

It belongs to the Bcl-2 family. In terms of processing, phosphorylated by MELK, leading to inhibit its pro-apoptotic function. Isoform 1 is widely expressed. Isoform 2 is testis-specific.

It is found in the cytoplasm. Its subcellular location is the cytosol. The protein resides in the endomembrane system. In terms of biological role, plays a role in apoptosis. The chain is Apoptosis facilitator Bcl-2-like protein 14 (BCL2L14) from Homo sapiens (Human).